We begin with the raw amino-acid sequence, 444 residues long: Phosphoglucosamine mutase (444 aa).

The Phosphoserine intermediate role is filled by serine 101. Serine 101, aspartate 239, aspartate 241, and aspartate 243 together coordinate Mg(2+). Phosphoserine is present on serine 101.

It belongs to the phosphohexose mutase family. Mg(2+) is required as a cofactor. In terms of processing, activated by phosphorylation.

The enzyme catalyses alpha-D-glucosamine 1-phosphate = D-glucosamine 6-phosphate. In terms of biological role, catalyzes the conversion of glucosamine-6-phosphate to glucosamine-1-phosphate. In Alcanivorax borkumensis (strain ATCC 700651 / DSM 11573 / NCIMB 13689 / SK2), this protein is Phosphoglucosamine mutase.